We begin with the raw amino-acid sequence, 200 residues long: MASHQDQASYRAGETKAHTEEKAGQVMGASKDKASEAKDRASEAAGHAAGKGQDTKEATKEKAQAAKERASETAQAAKDKTSSTSQAARDKAAESKDQTGGFLGEKTEQAKQKAAETAGAAKQKTAETAQYTKDSAIAGKDKTGSVLQQASEQVKSTVVGAKDAVMSTLGMTEDEAGTDDGANKDTSATAAATETTARDH.

Disordered stretches follow at residues 1 to 145 and 172 to 200; these read MASH…KTGS and TEDEAGTDDGANKDTSATAAATETTARDH. Basic and acidic residues-rich tracts occupy residues 13–23, 30–42, 53–81, 88–97, and 105–114; these read GETKAHTEEKA, SKDKASEAKDRAS, QDTKEATKEKAQAAKERASETAQAAKDKT, ARDKAAESKD, and EKTEQAKQKA. The stretch at 52-81 forms a coiled coil; sequence GQDTKEATKEKAQAAKERASETAQAAKDKT. Low complexity-rich tracts occupy residues 115–130 and 186–200; these read AETAGAAKQKTAETAQ and TSATAAATETTARDH.

This sequence belongs to the LEA type 4 family.

In terms of biological role, involved in response to stress. This Oryza sativa subsp. japonica (Rice) protein is Late embryogenesis abundant protein 19.